A 235-amino-acid polypeptide reads, in one-letter code: Large ribosomal subunit protein uL1 (235 aa).

Belongs to the universal ribosomal protein uL1 family. Part of the 50S ribosomal subunit.

In terms of biological role, binds directly to 23S rRNA. The L1 stalk is quite mobile in the ribosome, and is involved in E site tRNA release. Functionally, protein L1 is also a translational repressor protein, it controls the translation of the L11 operon by binding to its mRNA. The polypeptide is Large ribosomal subunit protein uL1 (Prochlorococcus marinus (strain MIT 9515)).